A 109-amino-acid chain; its full sequence is ATP-dependent Clp protease adapter protein ClpS (109 aa).

The interval 1–21 (MAERKQGGQNNGAGSSVITEV) is disordered.

It belongs to the ClpS family. Binds to the N-terminal domain of the chaperone ClpA.

Its function is as follows. Involved in the modulation of the specificity of the ClpAP-mediated ATP-dependent protein degradation. The polypeptide is ATP-dependent Clp protease adapter protein ClpS (Caulobacter sp. (strain K31)).